A 156-amino-acid chain; its full sequence is Putative F-box protein R637 (156 aa).

One can recognise an F-box domain in the interval 4-51 (HISSLLNEDCVRHIMCFLTDKEKGKFCLTCRDLLYLIKDVKFNDPVNK).

This chain is Putative F-box protein R637, found in Acanthamoeba polyphaga mimivirus (APMV).